The primary structure comprises 257 residues: Protein windbeutel (257 aa).

An N-terminal signal peptide occupies residues 1-21 (MMHILVTLLLVAIHSIPTTWA). The CXXC motif stretch occupies residues 24–27 (CTGC). A Prevents secretion from ER motif is present at residues 254–257 (KEEL).

In terms of assembly, homodimer. Interacts with pip; the interaction is direct and does not require pip to be folded. In terms of tissue distribution, briefly expressed in the follicle cells of the ovary, at around the time when the dorsoventral axis of the egg chamber is first established.

Its subcellular location is the endoplasmic reticulum lumen. Probable chaperone protein involved in dorsoventral axis patterning in early embryos. Probably acts by folding and targeting pipe (pip) into the Golgi. This Drosophila melanogaster (Fruit fly) protein is Protein windbeutel.